The sequence spans 447 residues: Exodeoxyribonuclease 7 large subunit (447 aa).

This sequence belongs to the XseA family. As to quaternary structure, heterooligomer composed of large and small subunits.

It localises to the cytoplasm. It carries out the reaction Exonucleolytic cleavage in either 5'- to 3'- or 3'- to 5'-direction to yield nucleoside 5'-phosphates.. In terms of biological role, bidirectionally degrades single-stranded DNA into large acid-insoluble oligonucleotides, which are then degraded further into small acid-soluble oligonucleotides. This is Exodeoxyribonuclease 7 large subunit from Geobacter sulfurreducens (strain ATCC 51573 / DSM 12127 / PCA).